A 332-amino-acid polypeptide reads, in one-letter code: Ketol-acid reductoisomerase (NADP(+)) (332 aa).

The region spanning 2–182 (AKIYHDLEVS…GATRAGVLET (181 aa)) is the KARI N-terminal Rossmann domain. Residues 25 to 28 (YGSQ), R48, S53, and 83 to 86 (DTEQ) contribute to the NADP(+) site. The active site involves H108. G134 contacts NADP(+). The region spanning 183 to 328 (TFKEETETDL…KVIREMMPWL (146 aa)) is the KARI C-terminal knotted domain. Mg(2+)-binding residues include D191, E195, E227, and E231. S252 provides a ligand contact to substrate.

This sequence belongs to the ketol-acid reductoisomerase family. Mg(2+) is required as a cofactor.

The catalysed reaction is (2R)-2,3-dihydroxy-3-methylbutanoate + NADP(+) = (2S)-2-acetolactate + NADPH + H(+). It carries out the reaction (2R,3R)-2,3-dihydroxy-3-methylpentanoate + NADP(+) = (S)-2-ethyl-2-hydroxy-3-oxobutanoate + NADPH + H(+). Its pathway is amino-acid biosynthesis; L-isoleucine biosynthesis; L-isoleucine from 2-oxobutanoate: step 2/4. It participates in amino-acid biosynthesis; L-valine biosynthesis; L-valine from pyruvate: step 2/4. Its function is as follows. Involved in the biosynthesis of branched-chain amino acids (BCAA). Catalyzes an alkyl-migration followed by a ketol-acid reduction of (S)-2-acetolactate (S2AL) to yield (R)-2,3-dihydroxy-isovalerate. In the isomerase reaction, S2AL is rearranged via a Mg-dependent methyl migration to produce 3-hydroxy-3-methyl-2-ketobutyrate (HMKB). In the reductase reaction, this 2-ketoacid undergoes a metal-dependent reduction by NADPH to yield (R)-2,3-dihydroxy-isovalerate. In Dictyoglomus thermophilum (strain ATCC 35947 / DSM 3960 / H-6-12), this protein is Ketol-acid reductoisomerase (NADP(+)).